A 476-amino-acid polypeptide reads, in one-letter code: MPMSLRLHNNLTRRVEPFAPLDPSSPTLYVCGPTVYNYAHIGNARGPVVFDVLAALLRRRYGALRYARNITDVDDKINAAAQAQGVPISTITDRFAAIYRQDMAALGVVPPDIEPEATAHIPQIVAMIEQLIANGHAYAAEGHVLFSVSSFDGYGKLSRRDPDEMLAGARVDVAPYKRDPGDFVLWKPSSADLPGWESPWGRGRPGWHIECSAMAAAHLGPTIDIHAGGVDLQFPHHENEIAQSECAHGGATFARFWLHNGMLNFSGAKMSKSLGNIETVHELIARHPPEALRYALLSAHYRQPLDWSDGLIEQAKNTLDRLYGTLRDLAALQADSGNDVAPSRTIPVEVESALEDDLNTPLALSVIASIASEARALRNELVHGGEPSTRMSDLHAVHAKLLGAGLALGLLQQDPAAWFSRGTDAGDDARITALVEERSTAKKAKDFARADAIRKQLAEEGIVLEDTPQGVRWKRA.

C31 is a Zn(2+) binding site. Positions 33 to 43 match the 'HIGH' region motif; it reads PTVYNYAHIGN. Residues C211, H236, and E240 each contribute to the Zn(2+) site. The 'KMSKS' region motif lies at 269-273; it reads KMSKS. An ATP-binding site is contributed by K272.

It belongs to the class-I aminoacyl-tRNA synthetase family. In terms of assembly, monomer. Zn(2+) serves as cofactor.

The protein resides in the cytoplasm. It carries out the reaction tRNA(Cys) + L-cysteine + ATP = L-cysteinyl-tRNA(Cys) + AMP + diphosphate. This chain is Cysteine--tRNA ligase, found in Xanthomonas axonopodis pv. citri (strain 306).